A 238-amino-acid polypeptide reads, in one-letter code: MFDPYLDELNKLLIVNHGEILLVPDGLQECYSKKQDAVIRSWLWSVPGFRRWRVTRMDVGDKLQVFNSVAYPDYLNEQPIMGIDLLWFGIKNKLVAVLDFQPLVQEKSYFDRYYQGLKSLKARYSDFNSKDNVRAYDLSNYFSPWVLLCKGDLFQASSSLPFVFSEFLNAYFDISNNFKKYNSRIEPNRVKELQISYDIYSSAHDPAHGLFKSYFGKQWSERFLKEFLFPHSIAKDKT.

The protein belongs to the HY2 family.

The enzyme catalyses 15,16-dihydrobiliverdin + oxidized 2[4Fe-4S]-[ferredoxin] = biliverdin IXalpha + reduced 2[4Fe-4S]-[ferredoxin] + 2 H(+). Catalyzes the two-electron reduction of biliverdin IX-alpha at the C15 methine bridge. The polypeptide is 15,16-dihydrobiliverdin:ferredoxin oxidoreductase (Prochlorococcus marinus (strain MIT 9211)).